The primary structure comprises 337 residues: Ketol-acid reductoisomerase (NADP(+)) (337 aa).

Positions 3–183 (VEMFYDDDAD…GGARAGVIKT (181 aa)) constitute a KARI N-terminal Rossmann domain. NADP(+) is bound by residues 26-29 (YGSQ), K49, S52, S54, and 84-87 (DTAQ). The active site involves H109. G135 serves as a coordination point for NADP(+). In terms of domain architecture, KARI C-terminal knotted spans 184 to 329 (TFKEETETDL…KKLRDLMSWV (146 aa)). Mg(2+)-binding residues include D192, E196, E228, and E232. Position 253 (S253) interacts with substrate.

The protein belongs to the ketol-acid reductoisomerase family. It depends on Mg(2+) as a cofactor.

It carries out the reaction (2R)-2,3-dihydroxy-3-methylbutanoate + NADP(+) = (2S)-2-acetolactate + NADPH + H(+). The catalysed reaction is (2R,3R)-2,3-dihydroxy-3-methylpentanoate + NADP(+) = (S)-2-ethyl-2-hydroxy-3-oxobutanoate + NADPH + H(+). It participates in amino-acid biosynthesis; L-isoleucine biosynthesis; L-isoleucine from 2-oxobutanoate: step 2/4. It functions in the pathway amino-acid biosynthesis; L-valine biosynthesis; L-valine from pyruvate: step 2/4. In terms of biological role, involved in the biosynthesis of branched-chain amino acids (BCAA). Catalyzes an alkyl-migration followed by a ketol-acid reduction of (S)-2-acetolactate (S2AL) to yield (R)-2,3-dihydroxy-isovalerate. In the isomerase reaction, S2AL is rearranged via a Mg-dependent methyl migration to produce 3-hydroxy-3-methyl-2-ketobutyrate (HMKB). In the reductase reaction, this 2-ketoacid undergoes a metal-dependent reduction by NADPH to yield (R)-2,3-dihydroxy-isovalerate. The polypeptide is Ketol-acid reductoisomerase (NADP(+)) (Mycolicibacterium smegmatis (strain ATCC 700084 / mc(2)155) (Mycobacterium smegmatis)).